The following is a 474-amino-acid chain: Trehalose-6-phosphate synthase (474 aa).

Residue Arg-10 participates in D-glucose 6-phosphate binding. Gly-22–Gly-23 serves as a coordination point for UDP-alpha-D-glucose. Tyr-77 and Asp-131 together coordinate D-glucose 6-phosphate. UDP-alpha-D-glucose-binding residues include Arg-263 and Lys-268. Arg-301 is a binding site for D-glucose 6-phosphate. Residues Phe-340 and Leu-366–Glu-370 contribute to the UDP-alpha-D-glucose site.

The protein belongs to the glycosyltransferase 20 family. As to quaternary structure, homotetramer.

The catalysed reaction is D-glucose 6-phosphate + UDP-alpha-D-glucose = alpha,alpha-trehalose 6-phosphate + UDP + H(+). Its pathway is glycan biosynthesis; trehalose biosynthesis. In terms of biological role, probably involved in the osmoprotection via the biosynthesis of trehalose. Catalyzes the transfer of glucose from UDP-alpha-D-glucose (UDP-Glc) to D-glucose 6-phosphate (Glc-6-P) to form trehalose-6-phosphate. Acts with retention of the anomeric configuration of the UDP-sugar donor. This chain is Trehalose-6-phosphate synthase, found in Escherichia coli O1:K1 / APEC.